Here is a 490-residue protein sequence, read N- to C-terminus: ABC transporter ATP-binding protein ModF (490 aa).

2 ABC transporter domains span residues 4–235 and 261–489; these read LQIL…AHSE and IVLN…LTKI. ATP contacts are provided by residues 36–43 and 293–300; these read GSNGSGKS and GPNGAGKS.

The protein belongs to the ABC transporter superfamily.

It is found in the cell inner membrane. Probably not involved in the transport of molybdenum into the cell. The chain is ABC transporter ATP-binding protein ModF (modF) from Escherichia coli (strain K12).